The following is a 527-amino-acid chain: Methane monooxygenase component A alpha chain (527 aa).

Positions 114, 144, and 147 each coordinate Fe cation. Cys-151 is an active-site residue. Glu-209, Glu-243, and His-246 together coordinate Fe cation.

This sequence belongs to the TmoA/XamoA family. M.capsulatus has two forms of methane monooxygenase, a soluble and a membrane-bound type. The soluble type consists of four components (A to D): protein A, comprising three chains, in an alpha-2, beta-2, gamma-2 configuration, is a nonheme iron protein containing an unusual mu-hydroxo bridge structure at its active site and interacts with both oxygen and methane. Fe cation is required as a cofactor.

It catalyses the reaction methane + NADH + O2 + H(+) = methanol + NAD(+) + H2O. It carries out the reaction methane + NADPH + O2 + H(+) = methanol + NADP(+) + H2O. Its function is as follows. Responsible for the initial oxygenation of methane to methanol in methanotrophs. It also catalyzes the monohydroxylation of a variety of unactivated alkenes, alicyclic, aromatic and heterocyclic compounds. This Methylococcus capsulatus (strain ATCC 33009 / NCIMB 11132 / Bath) protein is Methane monooxygenase component A alpha chain (mmoX).